The primary structure comprises 865 residues: Protein translocase subunit SecA (865 aa).

ATP is bound by residues Gln93, 111–115 (GEGKT), and Asp501. Zn(2+)-binding residues include Cys841, Cys843, Cys852, and Cys853.

The protein belongs to the SecA family. Monomer and homodimer. Part of the essential Sec protein translocation apparatus which comprises SecA, SecYEG and auxiliary proteins SecDF-YajC and YidC. The cofactor is Zn(2+).

The protein localises to the cell inner membrane. It localises to the cytoplasm. It catalyses the reaction ATP + H2O + cellular proteinSide 1 = ADP + phosphate + cellular proteinSide 2.. Part of the Sec protein translocase complex. Interacts with the SecYEG preprotein conducting channel. Has a central role in coupling the hydrolysis of ATP to the transfer of proteins into and across the cell membrane, serving as an ATP-driven molecular motor driving the stepwise translocation of polypeptide chains across the membrane. This chain is Protein translocase subunit SecA, found in Helicobacter pylori (strain J99 / ATCC 700824) (Campylobacter pylori J99).